The chain runs to 346 residues: Growth hormone-inducible transmembrane protein (346 aa).

Residues 1-45 (MLAARLVCLRTLPSRVFQPTFITKASPLVKNSITKNQWLLTPSRE) constitute a mitochondrion transit peptide. Topologically, residues 46 to 83 (YATKTRIRTHRGKTGQELKEAALEPSLEKVFKIDQMGK) are mitochondrial matrix. A helical membrane pass occupies residues 84 to 104 (WFVAGGAAVGLGALCYYGLGM). Topologically, residues 105–126 (SNEIGAIEKAVIWPQYVKDRIH) are mitochondrial intermembrane. Residues 127–147 (STYMYLAGSIGLTALSALALA) traverse the membrane as a helical segment. Residues 148–160 (RSPALMNFMMTGS) lie on the Mitochondrial matrix side of the membrane. Residues 161–181 (WMTIGATFAAMIGAGMLVQSI) form a helical membrane-spanning segment. Residues 182-191 (SYEQSPGPKH) are Mitochondrial intermembrane-facing. The chain crosses the membrane as a helical span at residues 192 to 212 (LAWMLHSGVMGAVVAPLTILG). At 213–214 (GP) the chain is on the mitochondrial matrix side. Residues 215–235 (LLLRAAWYTAGIVGGLSTVAM) traverse the membrane as a helical segment. At 236–245 (CAPSEKFLNM) the chain is on the mitochondrial intermembrane side. Residues 246–266 (GAPLGVGLGLVFASSLGSMFL) form a helical membrane-spanning segment. The Mitochondrial matrix portion of the chain corresponds to 267 to 272 (PPTSVA). The chain crosses the membrane as a helical span at residues 273-293 (GATLYSVAMYGGLVLFSMFLL). Residues 294–346 (YDTQKVVKRAEITPAYGAQKYDPINSMLTIYMDTLNIFMRVATMLATGSNRKK) lie on the Mitochondrial intermembrane side of the membrane.

It belongs to the BI1 family. As to quaternary structure, interacts with LETM1 and AFG3L2. In terms of processing, undergoes AFG3L2-mediated proteolytic degradation, upon hyperpolarization of mitochondria.

The protein resides in the mitochondrion inner membrane. Its function is as follows. Plays an important role in maintenance of mitochondrial morphology and in mediating either calcium or potassium/proton antiport. Mediates proton-dependent calcium efflux from mitochondrion. Also functions as an electroneutral mitochondrial proton/potassium exchanger. Required for the mitochondrial tubular network and cristae organization. Involved in apoptotic release of cytochrome c. Inhibits AFG3L2 proteolytic activity, stimulating respiration and stabilizing respiratory enzymes in actively respiring mitochondria. However, when mitochondria become hyperpolarized, GHITM loses its inhibitory activity toward AFG3L2 and the now active AFG3L2 turns first on GHITM and, if hyperpolarization persists, on other proteins of the mitochondria, leading to a broad remodeling of the proteome. The protein is Growth hormone-inducible transmembrane protein (Ghitm) of Rattus norvegicus (Rat).